Here is a 326-residue protein sequence, read N- to C-terminus: Nucleoporin Nup37 (326 aa).

WD repeat units lie at residues 70-117, 122-162, 164-203, and 294-325; these read HHGV…KNEY, GHSD…TAHF, LHSP…AILS, and GSVA…WVTE.

In terms of assembly, component of the Nup107-160 subcomplex of the nuclear pore complex (NPC). The Nup107-160 subcomplex includes NUP160, NUP133, NUP107, NUP98, NUP85, NUP43, NUP37, SEH1 and SEC13.

Its subcellular location is the chromosome. It localises to the centromere. The protein resides in the kinetochore. The protein localises to the nucleus. It is found in the nuclear pore complex. Its function is as follows. Component of the Nup107-160 subcomplex of the nuclear pore complex (NPC). The Nup107-160 subcomplex is required for the assembly of a functional NPC. The Nup107-160 subcomplex is also required for normal kinetochore microtubule attachment, mitotic progression and chromosome segregation. The chain is Nucleoporin Nup37 (Nup37) from Mus musculus (Mouse).